The primary structure comprises 346 residues: NADH-cytochrome b5 reductase 2 (346 aa).

Residues 28–50 traverse the membrane as a helical segment; that stretch reads GGSNAALYAGLAAAAGAGAYYFL. One can recognise an FAD-binding FR-type domain in the interval 95–200; sequence QGFISLKLDS…KGPIPKYPWS (106 aa). 203–238 contributes to the FAD binding site; it reads KHDHIALIAGGTGITPMYQLARAIFNNPADKTKVTL.

Belongs to the flavoprotein pyridine nucleotide cytochrome reductase family. FAD is required as a cofactor.

It localises to the mitochondrion outer membrane. The catalysed reaction is 2 Fe(III)-[cytochrome b5] + NADH = 2 Fe(II)-[cytochrome b5] + NAD(+) + H(+). May mediate the reduction of outer membrane cytochrome b5. This Botryotinia fuckeliana (strain B05.10) (Noble rot fungus) protein is NADH-cytochrome b5 reductase 2 (mcr1).